A 406-amino-acid polypeptide reads, in one-letter code: Glutamyl-tRNA reductase (406 aa).

Substrate-binding positions include 49-52 (TCHR), Ser107, 112-114 (EPQ), and Gln118. Catalysis depends on Cys50, which acts as the Nucleophile. An NADP(+)-binding site is contributed by 187-192 (GAGETG).

The protein belongs to the glutamyl-tRNA reductase family. As to quaternary structure, homodimer.

It catalyses the reaction (S)-4-amino-5-oxopentanoate + tRNA(Glu) + NADP(+) = L-glutamyl-tRNA(Glu) + NADPH + H(+). It functions in the pathway porphyrin-containing compound metabolism; protoporphyrin-IX biosynthesis; 5-aminolevulinate from L-glutamyl-tRNA(Glu): step 1/2. In terms of biological role, catalyzes the NADPH-dependent reduction of glutamyl-tRNA(Glu) to glutamate 1-semialdehyde (GSA). In Thermomicrobium roseum (strain ATCC 27502 / DSM 5159 / P-2), this protein is Glutamyl-tRNA reductase.